The chain runs to 129 residues: Small ribosomal subunit protein uS11 (129 aa).

It belongs to the universal ribosomal protein uS11 family. As to quaternary structure, part of the 30S ribosomal subunit. Interacts with proteins S7 and S18. Binds to IF-3.

Its function is as follows. Located on the platform of the 30S subunit, it bridges several disparate RNA helices of the 16S rRNA. Forms part of the Shine-Dalgarno cleft in the 70S ribosome. This is Small ribosomal subunit protein uS11 from Azorhizobium caulinodans (strain ATCC 43989 / DSM 5975 / JCM 20966 / LMG 6465 / NBRC 14845 / NCIMB 13405 / ORS 571).